The following is a 294-amino-acid chain: MKMWFRLATFVTLIIEFAHCQLGAGLTSALTGNTGNAAHAGNSGNMATSMAMAAAMGSDFAALGPLGAKLFSGAGMSPAVAYKMFDGSVADFQKYKAKMNLMKRLNAGGSGGIAGGGGGGATGGLGALAMGKLALFTGGGMDPVVAYKMFDGSVSDFQKYKMKKKLAAAAGAGGGMGIGTLAMMDGSMADMAKFNMLSKVLSPPTGSQTGAAANGTSAGAAVRGGSSPLRRIANMRMTRKLCEDTPVVYRMRRCSPQLPCRHALTTCKQTLRYGSVCCAKNLYAAAMFENMPGF.

Positions 1–20 (MKMWFRLATFVTLIIEFAHC) are cleaved as a signal peptide. Positions 205-221 (TGSQTGAAANGTSAGAA) are enriched in low complexity. Residues 205–225 (TGSQTGAAANGTSAGAAVRGG) are disordered.

Nacreous layer of shell (at protein level). Expressed primarily in the mantle with highest level in the mantle pallium and lower level in the mantle edge.

The protein localises to the secreted. The sequence is that of Glycine-rich protein 2 from Pinctada maxima (Silver-lipped pearl oyster).